Consider the following 210-residue polypeptide: Phosphate propanoyltransferase (210 aa).

26–28 is a binding site for CoA; the sequence is ISN. Zn(2+)-binding residues include H30 and H32. Positions 71 and 78 each coordinate CoA. A phosphate-binding site is contributed by R84. Zn(2+) contacts are provided by E90, H138, H140, and H186. Residue N193 participates in CoA binding.

This sequence belongs to the PduL family. The cofactor is Zn(2+).

It is found in the bacterial microcompartment. The enzyme catalyses propanoyl-CoA + phosphate = propanoyl phosphate + CoA. The protein operates within polyol metabolism; 1,2-propanediol degradation. Involved in 1,2-propanediol (1,2-PD) utilization within the bacterial microcompartment (BMC) dedicated to 1,2-PD degradation by catalyzing the conversion of propanoyl-CoA to propanoyl-phosphate. Required for optimal growth on 1,2-PD. CoA is regenerated within the BMC (for use by PduP) via this enzyme, although there must also be cofactor transport across the BMC. Directly targeted to the BMC. Its function is as follows. Expression of a cosmid containing the full 21-gene pdu operon in E.coli allows E.coli to grow on 1,2-propanediol (1,2-PD) with the appearance of bacterial microcompartments (BMC) in its cytoplasm. Functionally, the 1,2-PD-specific bacterial microcompartment (BMC) concentrates low levels of 1,2-PD catabolic enzymes, concentrates volatile reaction intermediates thus enhancing pathway flux and keeps the level of toxic, mutagenic propionaldehyde low. This chain is Phosphate propanoyltransferase, found in Citrobacter freundii.